Reading from the N-terminus, the 228-residue chain is MTMDGVFPLTATVDYCDIFLTHDSASVRKAHNTGWKHKMQVEHYYNAEVDPAKIQSVIDNVTKAYIDAGLPGFPELIAVGVNGQRGQPVGGPPRPPQPFHNGGRPGPPGRPPMGMFPPQRPMMPPPHMRPGLSQMPPGMRPPGPPPHGFMNGSMPPPLGTPVMENGPVAGQQSQAPVAPRIHPDRLRLAGNSIKSKLVIESIYCFYPFGCLDSQIATHTFLYHCANDS.

The segment at 11–43 (ATVDYCDIFLTHDSASVRKAHNTGWKHKMQVEH) adopts a Matrin-type; degenerate zinc-finger fold. The tract at residues 83–127 (GQRGQPVGGPPRPPQPFHNGGRPGPPGRPPMGMFPPQRPMMPPPH) is disordered. Pro residues predominate over residues 105 to 127 (PGPPGRPPMGMFPPQRPMMPPPH).

The protein belongs to the U1 small nuclear ribonucleoprotein C family. As to quaternary structure, U1 snRNP is composed of the 7 core Sm proteins B/B', D1, D2, D3, E, F and G that assemble in a heptameric protein ring on the Sm site of the small nuclear RNA to form the core snRNP, and at least 3 U1 snRNP-specific proteins U1-70K, U1-A and U1-C. U1-C interacts with U1 snRNA and the 5' splice-site region of the pre-mRNA.

It is found in the nucleus. Functionally, component of the spliceosomal U1 snRNP, which is essential for recognition of the pre-mRNA 5' splice-site and the subsequent assembly of the spliceosome. U1-C is directly involved in initial 5' splice-site recognition for both constitutive and regulated alternative splicing. The interaction with the 5' splice-site seems to precede base-pairing between the pre-mRNA and the U1 snRNA. Stimulates commitment or early (E) complex formation by stabilizing the base pairing of the 5' end of the U1 snRNA and the 5' splice-site region. In Batrachochytrium dendrobatidis (strain JAM81 / FGSC 10211) (Frog chytrid fungus), this protein is U1 small nuclear ribonucleoprotein C.